A 157-amino-acid polypeptide reads, in one-letter code: Transcription antitermination protein NusB (157 aa).

The protein belongs to the NusB family.

Involved in transcription antitermination. Required for transcription of ribosomal RNA (rRNA) genes. Binds specifically to the boxA antiterminator sequence of the ribosomal RNA (rrn) operons. The polypeptide is Transcription antitermination protein NusB (Helicobacter hepaticus (strain ATCC 51449 / 3B1)).